The primary structure comprises 508 residues: Immunoglobulin G-binding protein A (508 aa).

A signal peptide spans 1–36 (MKKKNIYSIRKLGVGIASVTLGTLLISGGVTPAANA). The short motif at 7–18 (YSIRKLGVGIAS) is the YSIRK-G/S signaling motif element. The Immunoglobulin-binding region E repeat unit spans residues 37-92 (AQHDEAQQNAFYQVLNMPNLNADQRNGFIQSLKDDPSQSANVLGEAQKLNDSQAPK). The Immunoglobulin-binding region D repeat unit spans residues 93 to 153 (ADAQQNKFNK…KKLNESQAPK (61 aa)). One copy of the Immunoglobulin-binding region A repeat lies at 154–211 (ADNNFNKEQQNAFYEILNMPNLNEEQRNGFIQSLKDDPSQSANLLAEAKKLNESQAPK). Residues 212 to 269 (ADNKFNKEQQNAFYEILHLPNLNEEQRNGFIQSLKDDPSQSANLLAEAKKLNDAQAPK) form an Immunoglobulin-binding region B repeat. One copy of the Immunoglobulin-binding region C repeat lies at 270–327 (ADNKFNKEQQNAFYEILHLPNLTEEQRNGFIQSLKDDPSVSKEILAEAKKLNDAQAPK). Basic and acidic residues predominate over residues 318–412 (KKLNDAQAPK…GNKPGKEDGN (95 aa)). 2 disordered regions span residues 318–424 (KKLN…DTVN) and 459–479 (KKQPANHADANKAQALPETGE). 12 consecutive repeat copies span residues 333-340 (KPGKEDGN), 341-348 (KPGKEDGN), 349-356 (KPGKEDNK), 357-364 (KPGKEDGN), 365-372 (KPGKEDNK), 373-380 (KPGKEDGN), 381-388 (KPGKEDGN), 389-396 (KPGKEDGN), 397-405 (KPGKEDGNK), 406-413 (PGKEDGNG), 414-421 (VHVVKPGD), and 422-429 (TVNDIAKA). The 12 X 8 AA approximate tandem repeats stretch occupies residues 333 to 408 (KPGKEDGNKP…GKEDGNKPGK (76 aa)). Positions 413–457 (GVHVVKPGDTVNDIAKANGTTADKIAADNKLADKNMIKPGQELVV) constitute a LysM domain. Residues 474–478 (LPETG) carry the LPXTG sorting signal motif. At T477 the chain carries Pentaglycyl murein peptidoglycan amidated threonine. Positions 478-508 (GEENPFIGTTVFGGLSLALGAALLAGRRREL) are cleaved as a propeptide — removed by sortase.

It belongs to the immunoglobulin-binding protein SpA family. As to quaternary structure, interacts with host TNFRSF1A; this interaction leads to the stimulation of both surface expression and shedding of TNFRSF1A.

The protein resides in the secreted. It localises to the cell wall. Its function is as follows. Plays a role in the inhibition of the host innate and adaptive immune responses. Possesses five immunoglobulin-binding domains that capture both the fragment crystallizable region (Fc region) and the Fab region (part of Ig that identifies antigen) of immunoglobulins. In turn, Staphylococcus aureus is protected from phagocytic killing via inhibition of Ig Fc region. In addition, the host elicited B-cell response is prevented due to a decrease of antibody-secreting cell proliferation that enter the bone marrow, thereby decreasing long-term antibody production. Inhibits osteogenesis by preventing osteoblast proliferation and expression of alkaline phosphatase, type I collagen, osteopontin and osteocalcin. Acts directly as a pro-inflammatory factor in the lung through its ability to bind and activate tumor necrosis factor alpha receptor 1/TNFRSF1A. The protein is Immunoglobulin G-binding protein A (spa) of Staphylococcus aureus.